The chain runs to 507 residues: Serine hydroxymethyltransferase (507 aa).

Position 283 is an N6-(pyridoxal phosphate)lysine (Lys-283).

Belongs to the SHMT family. In terms of assembly, homotetramer. The cofactor is pyridoxal 5'-phosphate.

The enzyme catalyses (6R)-5,10-methylene-5,6,7,8-tetrahydrofolate + glycine + H2O = (6S)-5,6,7,8-tetrahydrofolate + L-serine. It participates in one-carbon metabolism; tetrahydrofolate interconversion. In terms of biological role, interconversion of serine and glycine. The polypeptide is Serine hydroxymethyltransferase (mel-32) (Caenorhabditis elegans).